The chain runs to 225 residues: Urease accessory protein UreF (225 aa).

Belongs to the UreF family. UreD, UreF and UreG form a complex that acts as a GTP-hydrolysis-dependent molecular chaperone, activating the urease apoprotein by helping to assemble the nickel containing metallocenter of UreC. The UreE protein probably delivers the nickel.

It localises to the cytoplasm. Required for maturation of urease via the functional incorporation of the urease nickel metallocenter. This Arthrobacter sp. (strain FB24) protein is Urease accessory protein UreF.